We begin with the raw amino-acid sequence, 179 residues long: Translation initiation factor IF-3 (179 aa).

This sequence belongs to the IF-3 family. Monomer.

Its subcellular location is the cytoplasm. IF-3 binds to the 30S ribosomal subunit and shifts the equilibrium between 70S ribosomes and their 50S and 30S subunits in favor of the free subunits, thus enhancing the availability of 30S subunits on which protein synthesis initiation begins. In Buchnera aphidicola subsp. Acyrthosiphon pisum (strain APS) (Acyrthosiphon pisum symbiotic bacterium), this protein is Translation initiation factor IF-3.